The primary structure comprises 391 residues: 1-deoxy-D-xylulose 5-phosphate reductoisomerase (391 aa).

NADPH is bound by residues threonine 10, glycine 11, serine 12, isoleucine 13, asparagine 38, and asparagine 122. A 1-deoxy-D-xylulose 5-phosphate-binding site is contributed by lysine 123. Position 124 (glutamate 124) interacts with NADPH. Aspartate 148 is a binding site for Mn(2+). Serine 149, glutamate 150, serine 173, and histidine 196 together coordinate 1-deoxy-D-xylulose 5-phosphate. Glutamate 150 provides a ligand contact to Mn(2+). Glycine 202 lines the NADPH pocket. Residues serine 209, asparagine 214, lysine 215, and glutamate 218 each coordinate 1-deoxy-D-xylulose 5-phosphate. Residue glutamate 218 participates in Mn(2+) binding.

Belongs to the DXR family. The cofactor is Mg(2+). Requires Mn(2+) as cofactor.

It catalyses the reaction 2-C-methyl-D-erythritol 4-phosphate + NADP(+) = 1-deoxy-D-xylulose 5-phosphate + NADPH + H(+). It participates in isoprenoid biosynthesis; isopentenyl diphosphate biosynthesis via DXP pathway; isopentenyl diphosphate from 1-deoxy-D-xylulose 5-phosphate: step 1/6. Functionally, catalyzes the NADPH-dependent rearrangement and reduction of 1-deoxy-D-xylulose-5-phosphate (DXP) to 2-C-methyl-D-erythritol 4-phosphate (MEP). The chain is 1-deoxy-D-xylulose 5-phosphate reductoisomerase from Wolbachia pipientis subsp. Culex pipiens (strain wPip).